The sequence spans 170 residues: Crossover junction endodeoxyribonuclease RuvC (170 aa).

Residues Asp-8, Glu-67, and Asp-139 contribute to the active site. 3 residues coordinate Mg(2+): Asp-8, Glu-67, and Asp-139.

This sequence belongs to the RuvC family. In terms of assembly, homodimer which binds Holliday junction (HJ) DNA. The HJ becomes 2-fold symmetrical on binding to RuvC with unstacked arms; it has a different conformation from HJ DNA in complex with RuvA. In the full resolvosome a probable DNA-RuvA(4)-RuvB(12)-RuvC(2) complex forms which resolves the HJ. The cofactor is Mg(2+).

It is found in the cytoplasm. It catalyses the reaction Endonucleolytic cleavage at a junction such as a reciprocal single-stranded crossover between two homologous DNA duplexes (Holliday junction).. Functionally, the RuvA-RuvB-RuvC complex processes Holliday junction (HJ) DNA during genetic recombination and DNA repair. Endonuclease that resolves HJ intermediates. Cleaves cruciform DNA by making single-stranded nicks across the HJ at symmetrical positions within the homologous arms, yielding a 5'-phosphate and a 3'-hydroxyl group; requires a central core of homology in the junction. The consensus cleavage sequence is 5'-(A/T)TT(C/G)-3'. Cleavage occurs on the 3'-side of the TT dinucleotide at the point of strand exchange. HJ branch migration catalyzed by RuvA-RuvB allows RuvC to scan DNA until it finds its consensus sequence, where it cleaves and resolves the cruciform DNA. The sequence is that of Crossover junction endodeoxyribonuclease RuvC from Pectobacterium atrosepticum (strain SCRI 1043 / ATCC BAA-672) (Erwinia carotovora subsp. atroseptica).